A 39-amino-acid polypeptide reads, in one-letter code: Bomanin Short 3 (39 aa).

Positions 1-18 (MKFLSLAFVLGLLALANA) are cleaved as a signal peptide. Positions 19-23 (TPLNP) are excised as a propeptide. The cysteines at positions 32 and 35 are disulfide-linked.

It belongs to the bomanin family. Hemolymph (at protein level).

It localises to the secreted. In terms of biological role, secreted immune-induced peptide induced by Toll signaling. Has a role in resistance bacterial and fungal infections. The strength of antimicrobial activity appears to correlate with the overall level of expression. Has no activity against the fungus C.glabrata in vitro. The sequence is that of Bomanin Short 3 from Drosophila melanogaster (Fruit fly).